A 338-amino-acid polypeptide reads, in one-letter code: Ketol-acid reductoisomerase (NADP(+)) (338 aa).

Residues 1 to 181 (MKVFYDKDCD…GGGKAGIIET (181 aa)) enclose the KARI N-terminal Rossmann domain. NADP(+) contacts are provided by residues 24–27 (YGSQ), R47, and S52. H107 is a catalytic residue. G133 lines the NADP(+) pocket. A KARI C-terminal knotted domain is found at 182–327 (NFREETETDL…GKLRAMMPWI (146 aa)). D190, E194, E226, and E230 together coordinate Mg(2+). S251 serves as a coordination point for substrate.

It belongs to the ketol-acid reductoisomerase family. It depends on Mg(2+) as a cofactor.

It catalyses the reaction (2R)-2,3-dihydroxy-3-methylbutanoate + NADP(+) = (2S)-2-acetolactate + NADPH + H(+). It carries out the reaction (2R,3R)-2,3-dihydroxy-3-methylpentanoate + NADP(+) = (S)-2-ethyl-2-hydroxy-3-oxobutanoate + NADPH + H(+). Its pathway is amino-acid biosynthesis; L-isoleucine biosynthesis; L-isoleucine from 2-oxobutanoate: step 2/4. It participates in amino-acid biosynthesis; L-valine biosynthesis; L-valine from pyruvate: step 2/4. Involved in the biosynthesis of branched-chain amino acids (BCAA). Catalyzes an alkyl-migration followed by a ketol-acid reduction of (S)-2-acetolactate (S2AL) to yield (R)-2,3-dihydroxy-isovalerate. In the isomerase reaction, S2AL is rearranged via a Mg-dependent methyl migration to produce 3-hydroxy-3-methyl-2-ketobutyrate (HMKB). In the reductase reaction, this 2-ketoacid undergoes a metal-dependent reduction by NADPH to yield (R)-2,3-dihydroxy-isovalerate. In Polaromonas naphthalenivorans (strain CJ2), this protein is Ketol-acid reductoisomerase (NADP(+)).